Consider the following 733-residue polypeptide: Submandibular gland protein C (733 aa).

The signal sequence occupies residues 1–20 (MKLILLYLAVVLCFVGKARS). The interval 48–91 (KSSGGSKDYNLSDGGKSNSRKNLSPATGGSATQQSNLDDSHAPN) is disordered. N-linked (GlcNAc...) asparagine glycosylation is present at Asn-57. The segment covering 62–84 (GKSNSRKNLSPATGGSATQQSNL) has biased composition (polar residues). N-linked (GlcNAc...) asparagine glycosylation is found at Asn-141 and Asn-187. 4 disordered regions span residues 172–204 (GQQA…ADKP), 249–330 (LTED…NSSN), 369–450 (LTED…NSSN), and 496–733 (SVTE…PSVA). Over residues 186–199 (ENSSLSTGSATSNK) the composition is skewed to polar residues. Over residues 256 to 270 (TSTSASVSGDSSTSS) the composition is skewed to low complexity. A compositionally biased stretch (polar residues) spans 300-318 (GSKQNVEDSTLSTGSATSN). An N-linked (GlcNAc...) asparagine glycan is attached at Asn-327. Over residues 376–390 (TSTSASVSGDSSTSS) the composition is skewed to low complexity. Polar residues predominate over residues 420–438 (GSKQNVEDSTLSTGSATSN). 3 N-linked (GlcNAc...) asparagine glycosylation sites follow: Asn-447, Asn-514, and Asn-528. Composition is skewed to polar residues over residues 496–516 (SVTE…NNLS) and 525–535 (NPTNGSSSASS). Positions 538-552 (KPYEEGMRKLLKFLE) are enriched in basic and acidic residues. Low complexity-rich tracts occupy residues 563 to 574 (SVSGMSSESSRS) and 609 to 619 (SSNSSTGSATS). Asn-611 is a glycosylation site (N-linked (GlcNAc...) asparagine). A compositionally biased stretch (gly residues) spans 654-665 (GFNGPEGVGENN). The segment covering 677-701 (GSKSDSGSHNLSSGSGSRSNVSTGG) has biased composition (low complexity). Asn-686 and Asn-696 each carry an N-linked (GlcNAc...) asparagine glycan. Over residues 722–733 (TGKTQSGSPSVA) the composition is skewed to polar residues.

In terms of processing, N-glycosylated. Detected in terminal tubule cells of the submandibular gland (at protein level). Expressed in submandibular salivary glands of 3-day-old males but not adults. Expression in adult submandibular glands is restricted to females. Isoform 5 is expressed in both 3-day-old and adult sublingual glands.

It localises to the secreted. This Mus musculus (Mouse) protein is Submandibular gland protein C (Muc19).